Here is a 345-residue protein sequence, read N- to C-terminus: Protein PXR1 (345 aa).

Disordered regions lie at residues 1-25 and 166-317; these read MGLA…SNNN and VEDE…ASRL. One can recognise a G-patch domain in the interval 25-71; it reads NNQFGHQYLTKMGWTPGKGIGLVPDSITTHLKINIKTDNAGLGAKLQ. Positions 187–227 are enriched in basic residues; the sequence is KKEKKEKKEKKEKKEKKEKKEKKEKKEKKEKKEKKEKKEKK. A compositionally biased stretch (basic and acidic residues) spans 228–237; the sequence is EKKEKSDKKE. Basic residues predominate over residues 238–278; sequence KKEKKDKKEKKEKKEKKEKKEKKEKKEKKEKKEKKEKKEKK. Residues 279–288 show a composition bias toward basic and acidic residues; the sequence is EKKDKLDKES. A compositionally biased stretch (polar residues) spans 289–312; the sequence is SNAANVESTKSLVSDSSRESTPTP.

It belongs to the PINX1 family.

Its subcellular location is the nucleus. It localises to the nucleolus. Functionally, involved in rRNA-processing at A0, A1 and A2 sites and negatively regulates telomerase. This is Protein PXR1 (PXR1) from Lodderomyces elongisporus (strain ATCC 11503 / CBS 2605 / JCM 1781 / NBRC 1676 / NRRL YB-4239) (Yeast).